The primary structure comprises 311 residues: tRNA (cytosine(49)-C(5))-methyltransferase (311 aa).

Residues Ala118–Lys124, Asp142, Asp169, and Asp186 contribute to the S-adenosyl-L-methionine site. The active-site Nucleophile is the Cys239.

It belongs to the class I-like SAM-binding methyltransferase superfamily. RsmB/NOP family. As to quaternary structure, forms a tripartite complex with archease and tRNA. Binds only the oligomeric forms of the archease.

The protein resides in the cytoplasm. It carries out the reaction cytidine(49) in tRNA precursor + S-adenosyl-L-methionine = 5-methylcytidine(49) in tRNA precursor + S-adenosyl-L-homocysteine + H(+). With respect to regulation, substrate specificity and tendency to aggregate are influenced by archease. Its function is as follows. Catalyzes AdoMet-dependent formation of m5C in tRNA. In the presence of protein archease, specifically methylates the cytosine at position 49 (m5C49) of tRNA. In the absence of archease, catalyzes the formation of m5C at many locations in tRNAs or rRNAs. In Pyrococcus abyssi (strain GE5 / Orsay), this protein is tRNA (cytosine(49)-C(5))-methyltransferase.